The following is a 261-amino-acid chain: Short-chain dehydrogenase/reductase ARMGADRAFT_1018421 (261 aa).

NADP(+)-binding residues include isoleucine 21, aspartate 68, asparagine 95, lysine 128, tyrosine 161, lysine 165, valine 194, and threonine 196. Tyrosine 161 (proton acceptor) is an active-site residue. Catalysis depends on lysine 165, which acts as the Lowers pKa of active site Tyr.

The protein belongs to the short-chain dehydrogenases/reductases (SDR) family.

It participates in secondary metabolite biosynthesis. Its function is as follows. Short-chain dehydrogenase/reductase, part of the gene cluster that mediates the biosynthesis of melleolides, a range of antifungal and phytotoxic polyketide derivatives composed of an orsellinic acid (OA) moiety esterified to various sesquiterpene alcohols. The first step in melleolides biosynthesis is performed by the delta(6)-protoilludene synthase PRO1 which catalyzes the cyclization of farnesyl diphosphate to protoilludene. The orsellinic acid synthase armB produces OA by condensing acetyl-CoA with 3 malonyl-CoA units in a three-round chain elongation reaction folowed by a C2-C7 ring closure. ArmB further catalyzes the trans-esterification of OA to the various sesquiterpene alcohols resulting from the hydroxylation of protoilludene. The melleolides cluster also includes 5 cytochrome P450 monooxygenases, 4 NAD(+)-dependent oxidoreductases, one flavin-dependent oxidoreductase, and one O-methyltransferase. The cytochrome P450 monooxygenases may be involved in protoilludene hydroxylation to elaborate melleolides with multiple alcohol groups, such as melleolide D, which carries alcohol functionalities at C-4, C-5, C-10, and C-13. The role of the NAD(+)-dependent enzymes remains unknown. Numerous melleolides, including arnamial, show 5'-O-methylation of the aromatic moiety which may be catalyzed by the methyltransferase encoded in the cluster. The flavin-dependent oxidoreductase might represent the dehydrogenase yielding the aldehyde in position 1 of arnamial and other melleolides. Finally, several halogenase localized outside of the cluster, are able to catalyze the transfer of a single chlorine atom to the melleolide backbone, resulting in a 6'-chloromelleolide product. This chain is Short-chain dehydrogenase/reductase ARMGADRAFT_1018421, found in Armillaria gallica (Bulbous honey fungus).